The primary structure comprises 610 residues: Elongation factor 4 (610 aa).

The 183-residue stretch at 15-197 folds into the tr-type G domain; sequence KSIRNFSIIA…RIINDIPYPK (183 aa). GTP-binding positions include 27–32 and 144–147; these read DHGKST and NKID.

It belongs to the TRAFAC class translation factor GTPase superfamily. Classic translation factor GTPase family. LepA subfamily.

Its subcellular location is the cell membrane. The enzyme catalyses GTP + H2O = GDP + phosphate + H(+). Functionally, required for accurate and efficient protein synthesis under certain stress conditions. May act as a fidelity factor of the translation reaction, by catalyzing a one-codon backward translocation of tRNAs on improperly translocated ribosomes. Back-translocation proceeds from a post-translocation (POST) complex to a pre-translocation (PRE) complex, thus giving elongation factor G a second chance to translocate the tRNAs correctly. Binds to ribosomes in a GTP-dependent manner. The chain is Elongation factor 4 from Buchnera aphidicola subsp. Acyrthosiphon pisum (strain 5A).